The following is an 88-amino-acid chain: Apolipoprotein C-I (88 aa).

A signal peptide spans 1–26; that stretch reads MRLFLSLPVLVVVLAMVLEGPAPTQA.

Belongs to the apolipoprotein C1 family.

Its subcellular location is the secreted. In terms of biological role, inhibitor of lipoprotein binding to the low density lipoprotein (LDL) receptor, LDL receptor-related protein, and very low density lipoprotein (VLDL) receptor. Associates with high density lipoproteins (HDL) and the triacylglycerol-rich lipoproteins in the plasma and makes up about 10% of the protein of the VLDL and 2% of that of HDL. Appears to interfere directly with fatty acid uptake and is also the major plasma inhibitor of cholesteryl ester transfer protein (CETP). Binds free fatty acids and reduces their intracellular esterification. Modulates the interaction of APOE with beta-migrating VLDL and inhibits binding of beta-VLDL to the LDL receptor-related protein. This chain is Apolipoprotein C-I (APOC1), found in Phoca vitulina (Harbor seal).